Consider the following 551-residue polypeptide: Hyaluronan synthase 2 (551 aa).

Residues 1-11 are Cytoplasmic-facing; that stretch reads MHCERFICILR. A helical transmembrane segment spans residues 12 to 32; that stretch reads IIGTTLFGVSLLLGISAAYIV. The Extracellular segment spans residues 33–45; it reads GYQFIQTDNYYFS. Residues 46–66 traverse the membrane as a helical segment; it reads FGLYGAILALHLIIQSLFAFL. Topologically, residues 67–374 are cytoplasmic; that stretch reads EHRKMKRSLE…NSLWFHKHHL (308 aa). Residues 375-395 traverse the membrane as a helical segment; sequence WMTYEAVITGFFPFFLIATVI. At 396-402 the chain is on the extracellular side; sequence QLFYRGR. Residues 403–423 form a helical membrane-spanning segment; sequence IWNILLFLLTVQLVGLIKSSF. At 424–429 the chain is on the cytoplasmic side; that stretch reads ASALRG. A helical membrane pass occupies residues 430–450; sequence NIVMVFMSFYSVLYMSSLLPA. Over 451–470 the chain is Extracellular; the sequence is KMFAIATINKAGWGTSGRKT. The chain crosses the membrane as a helical span at residues 471 to 491; it reads IVVNFIGLIPITVWFTILLGG. The Cytoplasmic portion of the chain corresponds to 492–509; sequence VCYTIWRETKKPFSESEK. The helical transmembrane segment at 510-530 threads the bilayer; it reads IVLAVGAILYACYWVMLLTMY. At 531–551 the chain is on the extracellular side; that stretch reads VSLVMKCGRRRKEPQHDLVLA.

Belongs to the NodC/HAS family. Homodimer; dimerization promotes enzymatic activity. Mg(2+) serves as cofactor.

The protein resides in the cell membrane. It localises to the endoplasmic reticulum membrane. It is found in the vesicle. Its subcellular location is the golgi apparatus membrane. The protein localises to the lysosome. The enzyme catalyses [hyaluronan](n) + UDP-N-acetyl-alpha-D-glucosamine = N-acetyl-beta-D-glucosaminyl-(1-&gt;4)-[hyaluronan](n) + UDP + H(+). The catalysed reaction is N-acetyl-beta-D-glucosaminyl-(1-&gt;4)-[hyaluronan](n) + UDP-alpha-D-glucuronate = [hyaluronan](n+1) + UDP + H(+). Its pathway is glycan biosynthesis; hyaluronan biosynthesis. In terms of biological role, catalyzes the addition of GlcNAc or GlcUA monosaccharides to the nascent hyaluronan polymer. Therefore, it is essential to hyaluronan synthesis a major component of most extracellular matrices that has a structural role in tissues architectures and regulates cell adhesion, migration and differentiation. This is one of three isoenzymes responsible for cellular hyaluronan synthesis and it is particularly responsible for the synthesis of high molecular mass hyaluronan. In Xenopus laevis (African clawed frog), this protein is Hyaluronan synthase 2 (has2).